Here is a 118-residue protein sequence, read N- to C-terminus: Large ribosomal subunit protein bL20 (118 aa).

This sequence belongs to the bacterial ribosomal protein bL20 family.

Binds directly to 23S ribosomal RNA and is necessary for the in vitro assembly process of the 50S ribosomal subunit. It is not involved in the protein synthesizing functions of that subunit. This is Large ribosomal subunit protein bL20 from Staphylococcus aureus (strain Mu3 / ATCC 700698).